A 238-amino-acid chain; its full sequence is tRNA (guanine-N(7)-)-methyltransferase (238 aa).

Residues Glu-68, Glu-93, Asp-120, and Asp-143 each coordinate S-adenosyl-L-methionine. Residue Asp-143 is part of the active site. Residues Lys-147, Asp-179, and 216–219 contribute to the substrate site; that span reads TKFE.

This sequence belongs to the class I-like SAM-binding methyltransferase superfamily. TrmB family. In terms of assembly, monomer.

It carries out the reaction guanosine(46) in tRNA + S-adenosyl-L-methionine = N(7)-methylguanosine(46) in tRNA + S-adenosyl-L-homocysteine. It participates in tRNA modification; N(7)-methylguanine-tRNA biosynthesis. Catalyzes the formation of N(7)-methylguanine at position 46 (m7G46) in tRNA. This is tRNA (guanine-N(7)-)-methyltransferase from Edwardsiella ictaluri (strain 93-146).